The following is a 1054-amino-acid chain: Filament-like plant protein 6 (1054 aa).

Coiled coils occupy residues 64 to 139, 174 to 200, and 250 to 341; these read VQIK…VKQH, AEDR…KDHE, and SNML…RKKL. Disordered regions lie at residues 359 to 390 and 448 to 506; these read RDSG…GSEF and EAQL…KEKD. Low complexity-rich tracts occupy residues 371–380, 450–461, and 470–494; these read VKVSSPCKSP, QLQQNNSQKSSL, and SNPS…GSLS. The stretch at 389 to 463 forms a coiled coil; it reads EFSLDNAQKF…NNSQKSSLEV (75 aa). Coiled coils occupy residues 637–666 and 788–944; these read QNLV…RIHD and ESDS…IFVL. Residues 951–1054 form a disordered region; it reads FRPQPEQMRS…SRFFSSKSGY (104 aa). The segment covering 1007 to 1032 has biased composition (low complexity); it reads PSDSETSDTTTSPSRVGSRLSRSGSS.

It belongs to the FPP family. Interacts with WPP/MAF proteins.

The chain is Filament-like plant protein 6 (FPP6) from Arabidopsis thaliana (Mouse-ear cress).